The sequence spans 879 residues: Translation initiation factor IF-2 (879 aa).

The disordered stretch occupies residues 48–261 (EAFPPPPEPA…RPHKSKKQRR (214 aa)). Positions 82–111 (PAADAAAPPAVTTPPSAAPAGATTSAPSDA) are enriched in low complexity. Pro residues-rich tracts occupy residues 119 to 142 (PPRP…PSGP), 152 to 163 (SPMPRPMPPRPV), and 173 to 197 (PGIP…PPRP). Residues 198-213 (AAGRAAPGRGAPIRLP) show a composition bias toward low complexity. Gly residues predominate over residues 228 to 246 (PGVGGRGRGAPGGAFGRGP). Basic residues predominate over residues 251-260 (SRPHKSKKQR). In terms of domain architecture, tr-type G spans 372–543 (PRPPVVTVMG…AILLTADAAL (172 aa)). A G1 region spans residues 381–388 (GHVDHGKT). Residue 381-388 (GHVDHGKT) coordinates GTP. The G2 stretch occupies residues 406–410 (GITQH). Positions 431–434 (DTPG) are G3. Residues 431–435 (DTPGH) and 485–488 (NKID) contribute to the GTP site. Residues 485 to 488 (NKID) are G4. The interval 521–523 (SAL) is G5.

It belongs to the TRAFAC class translation factor GTPase superfamily. Classic translation factor GTPase family. IF-2 subfamily.

Its subcellular location is the cytoplasm. Functionally, one of the essential components for the initiation of protein synthesis. Protects formylmethionyl-tRNA from spontaneous hydrolysis and promotes its binding to the 30S ribosomal subunits. Also involved in the hydrolysis of GTP during the formation of the 70S ribosomal complex. This Acidothermus cellulolyticus (strain ATCC 43068 / DSM 8971 / 11B) protein is Translation initiation factor IF-2.